The chain runs to 877 residues: Dystroglycan 1 (877 aa).

The N-terminal stretch at 1-29 (MRMSAGLSLLIPLWGRTFLLLLSVAVTQS) is a signal peptide. A required for laminin recognition region spans residues 30-408 (RWPSEPSDAV…GHIRPTMTIP (379 aa)). The tract at residues 49 to 71 (SMHSVLSDLHEAVPTVVGIPDGT) is O-glycosylated at one site. N-linked (GlcNAc...) asparagine glycosylation is present at asparagine 141. Cysteine 182 and cysteine 264 are disulfide-bonded. The interval 316 to 468 (ATPTPVTAIG…PPTRIRTTTS (153 aa)) is mucin-like domain. Residues threonine 317, threonine 319, and threonine 379 are each glycosylated (O-linked (Man6P...) threonine). Disordered stretches follow at residues 380-444 (PTLG…PVPR) and 458-480 (SPPT…QRPE). Low complexity predominate over residues 413 to 433 (PTAVATPPTPTTKNPRVSXPT). Residues 446–468 (TTKAPITRLETASPPTRIRTTTS) form an O-glycosylated at seven sites with GalNAc region. Residues 585-694 (RAPARFTAKF…MSIAVTGSGS (110 aa)) enclose the Peptidase S72 domain. N-linked (GlcNAc...) asparagine glycans are attached at residues asparagine 623, asparagine 631, and asparagine 643. An intrachain disulfide couples cysteine 651 to cysteine 695. Residues 706–717 (PKRVPSEAPPTE) show a composition bias toward pro residues. The disordered stretch occupies residues 706–727 (PKRVPSEAPPTEVPDRDPEKSS). Over residues 718 to 727 (VPDRDPEKSS) the composition is skewed to basic and acidic residues. A helical transmembrane segment spans residues 732–757 (YLHTVIPAVVVAAILLIAGIIAMICY). The Nuclear localization signal signature appears at 758–764 (RKKRKGK). Residue threonine 772 is modified to Phosphothreonine. A required for interaction with CAV3 region spans residues 801–877 (LQEEKAPLPP…YRSPPPYVPP (77 aa)). The disordered stretch occupies residues 805–877 (KAPLPPPEYP…YRSPPPYVPP (73 aa)). Over residues 814–828 (PNQSVPETTPLNQDT) the composition is skewed to polar residues. A compositionally biased stretch (pro residues) spans 841-852 (NAPPYQPPPPFT). The segment at 862 to 877 (PKNMTPYRSPPPYVPP) is required for binding DMD and UTRN. Residues 871-874 (PPPY) carry the PPXY motif motif. A Phosphotyrosine; by SRC modification is found at tyrosine 874.

In terms of assembly, monomer. Heterodimer of alpha- and beta-dystroglycan subunits which are the central components of the dystrophin-glycoprotein complex. This complex then can form a dystrophin-associated glycoprotein complex (DGC) which is composed of three subcomplexes: a cytoplasmic complex comprised of DMD (or UTRN), DTNA and a number of syntrophins, such as SNTB1, SNTB2, SNTG1 and SNTG2, the transmembrane dystroglycan complex, and the sarcoglycan-sarcospan complex. Interacts (via the N-terminal of alphaDAG1) with LARGE1; the interaction enhances laminin binding. Interacts with SGCD. Interacts with AGR2 and AGR3. Interacts (betaDAG1) with DMD; the interaction is inhibited by phosphorylation on the PPXY motif. Interacts (betaDAG1, via its PPXY motif) with UTRN (via its WWW and ZZ domains); the interaction is inhibited by phosphorylation on the PPXY motif. Interacts (betaDAG1, via its phosphorylated PPXY motif) with the SH2 domain-containing proteins, FYN, CSK, NCK and SHC. Interacts (betaDAG1) with CAV3 (via a central WW-like domain); the interaction disrupts the binding of DMD. BetaDAG1 directly interacts with ANK3, but not with ANK2; this interaction does not interfere with DMD-binding and is required for retention at costameres. Identified in a dystroglycan complex that contains at least PRX, DRP2, UTRN, DMD and DAG1. Interacts with POMGNT1. BetaDAG1 interacts with CD93. In terms of processing, O-glycosylated. POMGNT1 catalyzes the initial addition of N-acetylglucosamine, giving rise to the GlcNAc(beta1-2)Man(alpha1-)O-Ser/Thr moiety and thus providing the necessary basis for the addition of further carbohydrate moieties. Heavily O-glycosylated comprising of up to two thirds of its mass and the carbohydrate composition differs depending on tissue type. Mucin-type O-glycosylation is important for ligand binding activity. O-mannosylation of alpha-DAG1 is found in high abundance in both brain and muscle where the most abundant glycan is Sia-alpha-2-3-Gal-beta-1-4-Glc-NAc-beta-1-2-Man. In muscle, glycosylation on Thr-317, Thr-319 and Thr-379 by a phosphorylated O-mannosyl glycan with the structure 2-(N-acetylamido)-2-deoxygalactosyl-beta-1,3-2-(N-acetylamido)-2-deoxyglucosyl-beta-1,4-6-phosphomannose is mediated by like-acetylglucosaminyltransferase (LARGE1) protein amd is required for laminin binding. O-glycosylated in the N-terminal region with a core 1 or possibly core 8 glycan. The brain form displays a unique glycosylation pattern which is absent in other tissues; this form shows enhanced binding to laminin LAMA5 compared to the skeletal muscle form. Post-translationally, N-glycosylated. Autolytic cleavage produces the alpha and beta subunits. In cutaneous cells, as well as in certain pathological conditions, shedding of beta-dystroglycan can occur releasing a peptide of about 30 kDa. In terms of processing, SRC-mediated phosphorylation of the PPXY motif of the beta subunit recruits SH2 domain-containing proteins, but inhibits binding to WWW domain-containing proteins, DMD and UTRN. This phosphorylation also inhibits nuclear entry.

The protein resides in the secreted. Its subcellular location is the extracellular space. The protein localises to the cell membrane. It is found in the cytoplasm. It localises to the cytoskeleton. The protein resides in the nucleus. Its subcellular location is the nucleoplasm. The protein localises to the sarcolemma. It is found in the postsynaptic cell membrane. Its function is as follows. The dystroglycan complex is involved in a number of processes including laminin and basement membrane assembly, sarcolemmal stability, cell survival, peripheral nerve myelination, nodal structure, cell migration, and epithelial polarization. In terms of biological role, extracellular peripheral glycoprotein that acts as a receptor for extracellular matrix proteins containing laminin-G domains. Receptor for laminin-2 (LAMA2) and agrin in peripheral nerve Schwann cells. Also acts as a receptor for laminin LAMA5. Functionally, transmembrane protein that plays important roles in connecting the extracellular matrix to the cytoskeleton. Acts as a cell adhesion receptor in both muscle and non-muscle tissues. Receptor for both DMD and UTRN and, through these interactions, scaffolds axin to the cytoskeleton. Also functions in cell adhesion-mediated signaling and implicated in cell polarity. This is Dystroglycan 1 from Sus scrofa (Pig).